A 281-amino-acid polypeptide reads, in one-letter code: NAD kinase (281 aa).

Aspartate 61 serves as the catalytic Proton acceptor. Residues 61–62 (DG), 134–135 (ND), arginine 145, aspartate 164, 175–180 (TAYSLS), and glutamine 234 contribute to the NAD(+) site.

Belongs to the NAD kinase family. A divalent metal cation serves as cofactor.

It localises to the cytoplasm. It carries out the reaction NAD(+) + ATP = ADP + NADP(+) + H(+). Involved in the regulation of the intracellular balance of NAD and NADP, and is a key enzyme in the biosynthesis of NADP. Catalyzes specifically the phosphorylation on 2'-hydroxyl of the adenosine moiety of NAD to yield NADP. The sequence is that of NAD kinase from Clostridium botulinum (strain 657 / Type Ba4).